Reading from the N-terminus, the 80-residue chain is UPF0057 membrane protein ZK632.10 (80 aa).

Helical transmembrane passes span 4-24 (ILLA…DVGC) and 32-52 (ILLT…IILC).

The protein belongs to the UPF0057 (PMP3) family.

The protein resides in the membrane. This is UPF0057 membrane protein ZK632.10 from Caenorhabditis elegans.